The primary structure comprises 231 residues: Large ribosomal subunit protein uL1 (231 aa).

This sequence belongs to the universal ribosomal protein uL1 family. Part of the 50S ribosomal subunit.

In terms of biological role, binds directly to 23S rRNA. The L1 stalk is quite mobile in the ribosome, and is involved in E site tRNA release. Functionally, protein L1 is also a translational repressor protein, it controls the translation of the L11 operon by binding to its mRNA. The protein is Large ribosomal subunit protein uL1 of Neisseria meningitidis serogroup C (strain 053442).